An 82-amino-acid chain; its full sequence is Cytochrome c oxidase subunit 8, mitochondrial (82 aa).

A mitochondrion-targeting transit peptide spans 1-31 (MFSRVALRAAPRQQPFSLVARRTFQTTRAQL). Residues 32-52 (SSPYHYPEGPRSNLPFNPKTR) lie on the Mitochondrial matrix side of the membrane. Residues 53-75 (FFWFRYLMYCVVGFGSPVAIAVW) traverse the membrane as a helical segment. The Mitochondrial intermembrane portion of the chain corresponds to 76–82 (QTYRPRS).

The protein belongs to the cytochrome c oxidase VIIc family. In terms of assembly, component of the cytochrome c oxidase (complex IV, CIV), a multisubunit enzyme composed of 11 subunits. The complex is composed of a catalytic core of 3 subunits Cox1, Cox2 and Cox3, encoded in the mitochondrial DNA, and 8 supernumerary subunits Cox4, Cox5a/Cox5, Cox6, Cox7, Cox8, Cox7a/Cox9, Cox6b/Cox12 and Cox6a/Cox13, which are encoded in the nuclear genome. The complex exists as a monomer or a dimer and forms respiratory supercomplexes (SCs) in the inner mitochondrial membrane with NADH-ubiquinone oxidoreductase (complex I, CI) and ubiquinol-cytochrome c oxidoreductase (cytochrome b-c1 complex, complex III, CIII), resulting in various different assemblies (supercomplexes I(1)IV(1), I(1)III(3)IV(2), III(2)IV(1) and III(2)IV(2) as well as larger supercomplexes of compositions like I(1)III(2)IV(5-6)).

The protein localises to the mitochondrion inner membrane. It functions in the pathway energy metabolism; oxidative phosphorylation. Its function is as follows. Component of the cytochrome c oxidase, the last enzyme in the mitochondrial electron transport chain which drives oxidative phosphorylation. The respiratory chain contains 3 multisubunit complexes succinate dehydrogenase (complex II, CII), ubiquinol-cytochrome c oxidoreductase (cytochrome b-c1 complex, complex III, CIII) and cytochrome c oxidase (complex IV, CIV), that cooperate to transfer electrons derived from NADH and succinate to molecular oxygen, creating an electrochemical gradient over the inner membrane that drives transmembrane transport and the ATP synthase. Cytochrome c oxidase is the component of the respiratory chain that catalyzes the reduction of oxygen to water. Electrons originating from reduced cytochrome c in the intermembrane space (IMS) are transferred via the dinuclear copper A center (CU(A)) of Cox2 and heme A of Cox1 to the active site in Cox1, a binuclear center (BNC) formed by heme A3 and copper B (CU(B)). The BNC reduces molecular oxygen to 2 water molecules using 4 electrons from cytochrome c in the IMS and 4 protons from the mitochondrial matrix. This is Cytochrome c oxidase subunit 8, mitochondrial (cox-15) from Neurospora crassa (strain ATCC 24698 / 74-OR23-1A / CBS 708.71 / DSM 1257 / FGSC 987).